Here is a 172-residue protein sequence, read N- to C-terminus: Gastrula zinc finger protein XlCGF51.1A (172 aa).

6 consecutive C2H2-type zinc fingers follow at residues 6–28 (FSCS…NKIH), 34–56 (LICS…QRSH), 62–84 (FSCT…QRTH), 90–112 (FSCT…MLKH), 122–144 (LDCS…RKSH), and 150–172 (LQCS…QRVH).

This sequence belongs to the krueppel C2H2-type zinc-finger protein family.

Its subcellular location is the nucleus. In terms of biological role, may be involved in transcriptional regulation. The sequence is that of Gastrula zinc finger protein XlCGF51.1A from Xenopus laevis (African clawed frog).